Reading from the N-terminus, the 92-residue chain is Small ribosomal subunit protein uS19 (92 aa).

It belongs to the universal ribosomal protein uS19 family.

Protein S19 forms a complex with S13 that binds strongly to the 16S ribosomal RNA. The protein is Small ribosomal subunit protein uS19 of Francisella tularensis subsp. tularensis (strain FSC 198).